The sequence spans 304 residues: Homoserine kinase (304 aa).

ATP is bound at residue 90-100 (PLARGLGSSAS).

Belongs to the GHMP kinase family. Homoserine kinase subfamily.

It is found in the cytoplasm. The enzyme catalyses L-homoserine + ATP = O-phospho-L-homoserine + ADP + H(+). Its pathway is amino-acid biosynthesis; L-threonine biosynthesis; L-threonine from L-aspartate: step 4/5. Catalyzes the ATP-dependent phosphorylation of L-homoserine to L-homoserine phosphate. The sequence is that of Homoserine kinase from Staphylococcus aureus (strain MRSA252).